A 223-amino-acid polypeptide reads, in one-letter code: Deoxyribose-phosphate aldolase 1 (223 aa).

D91 serves as the catalytic Proton donor/acceptor. K153 functions as the Schiff-base intermediate with acetaldehyde in the catalytic mechanism. The Proton donor/acceptor role is filled by K182.

Belongs to the DeoC/FbaB aldolase family. DeoC type 1 subfamily.

It is found in the cytoplasm. The catalysed reaction is 2-deoxy-D-ribose 5-phosphate = D-glyceraldehyde 3-phosphate + acetaldehyde. The protein operates within carbohydrate degradation; 2-deoxy-D-ribose 1-phosphate degradation; D-glyceraldehyde 3-phosphate and acetaldehyde from 2-deoxy-alpha-D-ribose 1-phosphate: step 2/2. Its function is as follows. Catalyzes a reversible aldol reaction between acetaldehyde and D-glyceraldehyde 3-phosphate to generate 2-deoxy-D-ribose 5-phosphate. This chain is Deoxyribose-phosphate aldolase 1, found in Yersinia pestis.